The sequence spans 359 residues: Type-1 angiotensin II receptor A (359 aa).

Residues 1-25 (MALNSSAEDGIKRIQDDCPKAGRHS) lie on the Extracellular side of the membrane. Asparagine 4 is a glycosylation site (N-linked (GlcNAc...) asparagine). Residues glutamine 15 and aspartate 17 each contribute to the angiotensin II site. 2 disulfides stabilise this stretch: cysteine 18–cysteine 274 and cysteine 101–cysteine 180. Residues 26–55 (YIFVMIPTLYSIIFVVGIFGNSLVVIVIYF) form a helical membrane-spanning segment. The Cytoplasmic portion of the chain corresponds to 56-61 (YMKLKT). The chain crosses the membrane as a helical span at residues 62–89 (VASVFLLNLALADLCFLLTLPLWAVYTA). Residues 90–98 (MEYRWPFGN) lie on the Extracellular side of the membrane. The helical transmembrane segment at 99 to 125 (HLCKIASASVSFNLYASVFLLTCLSID) threads the bilayer. Over 126 to 141 (RYLAIVHPMKSRLRRT) the chain is Cytoplasmic. Residues 142–165 (MLVAKVTCIIIWLMAGLASLPAVI) traverse the membrane as a helical segment. At 166–190 (HRNVYFIENTNITVCAFHYESRNST) the chain is on the extracellular side. Residue arginine 167 participates in angiotensin II binding. Residue asparagine 176 is glycosylated (N-linked (GlcNAc...) asparagine). Phenylalanine 182, histidine 183, and tyrosine 184 together coordinate angiotensin II. The N-linked (GlcNAc...) asparagine glycan is linked to asparagine 188. Residues 191–216 (LPIGLGLTKNILGFLFPFLIILTSYT) form a helical membrane-spanning segment. Position 199 (lysine 199) interacts with angiotensin II. Over 217 to 239 (LIWKALKKAYEIQKNKPRNDDIF) the chain is Cytoplasmic. Residues 240–268 (RIIMAIVLFFFFSWVPHQIFTFLDVLIQL) form a helical membrane-spanning segment. The Extracellular segment spans residues 269 to 278 (GVIHDCKISD). A helical membrane pass occupies residues 279-304 (IVDTAMPITICIAYFNNCLNPLFYGF). The Cytoplasmic segment spans residues 305-359 (LGKKFKKYFLQLLKYIPPKAKSHSSLSTKMSTLSYRPSDNMSSSAKKPASCFEVE). Positions 337 to 349 (LSYRPSDNMSSSA) are enriched in polar residues. A disordered region spans residues 337–359 (LSYRPSDNMSSSAKKPASCFEVE). The S-palmitoyl cysteine moiety is linked to residue cysteine 355.

It belongs to the G-protein coupled receptor 1 family. As to quaternary structure, interacts with MAS1. Interacts with ARRB1. Interacts with FLNA (via filamin repeat 21); increases PKA-mediated phosphorylation of FLNA. Post-translationally, C-terminal Ser or Thr residues may be phosphorylated. Is expressed in the liver, kidney, aorta, lung, uterus, ovary, spleen, heart, adrenal gland, and vascular smooth muscle cell.

Its subcellular location is the cell membrane. Receptor for angiotensin II, a vasoconstricting peptide, which acts as a key regulator of blood pressure and sodium retention by the kidney. The activated receptor in turn couples to G-alpha proteins G(q) (GNAQ, GNA11, GNA14 or GNA15) and thus activates phospholipase C and increases the cytosolic Ca(2+) concentrations, which in turn triggers cellular responses such as stimulation of protein kinase C. This Rattus norvegicus (Rat) protein is Type-1 angiotensin II receptor A (Agtr1).